The primary structure comprises 402 residues: LIM/homeobox protein Lhx5 (402 aa).

LIM zinc-binding domains lie at 3 to 61 and 62 to 125; these read VHCA…RRFG and TKCA…SSSL. Residues 124–148 are compositionally biased toward low complexity; sequence SLKEGSLNSVSSCTDRSLSPDLQDP. 2 disordered regions span residues 124 to 186 and 298 to 402; these read SLKE…PRTT and HGPP…AAVW. Residues 151–167 are compositionally biased toward basic and acidic residues; it reads DDPKETDNSTSSDKETA. The segment at residues 180-239 is a DNA-binding region (homeobox); the sequence is RRGPRTTIKAKQLETLKAAFAATPKPTRHIREQLAQETGLNMRVIQVWFQNRRSKERRMK. 2 stretches are compositionally biased toward low complexity: residues 300–311 and 322–336; these read PPSQAQSPADSS and PLGALEPPLAGPHGA.

The protein localises to the nucleus. Functionally, plays an essential role in the regulation of neuronal differentiation and migration during development of the central nervous system. The polypeptide is LIM/homeobox protein Lhx5 (Lhx5) (Mus musculus (Mouse)).